A 207-amino-acid polypeptide reads, in one-letter code: 23 kDa calcium-binding protein (207 aa).

M1 bears the Blocked amino end (Met) mark. 4 EF-hand domains span residues 17 to 52 (AKLD…TFEN), 60 to 95 (VTAD…CLKK), 119 to 154 (MKLD…TYKQ), and 161 to 196 (PTEA…GLKK). 19 residues coordinate Ca(2+): D30, N32, N34, T36, E41, D73, D75, N77, E84, D132, D134, S136, Q138, E143, D174, D176, N178, T180, and E185.

In terms of biological role, expected to play a crucial role in calcium-dependent regulation of ciliary movement. This is 23 kDa calcium-binding protein from Tetrahymena thermophila.